The primary structure comprises 808 residues: Envelope glycoprotein B (808 aa).

Residues 1–19 form the signal peptide; the sequence is MVPNKHLLLIILSFSTACG. The Virion surface segment spans residues 20-701; that stretch reads QTTPTTAVEK…TGILNFIKNP (682 aa). Residue Asn30 is glycosylated (N-linked (GlcNAc...) asparagine; by host). Disulfide bonds link Cys45–Cys498, Cys62–Cys454, Cys136–Cys201, Cys291–Cys338, and Cys520–Cys557. The tract at residues 101 to 107 is involved in fusion and/or binding to host membrane; the sequence is IFNGWTR. The N-linked (GlcNAc...) asparagine; by host glycan is linked to Asn158. The tract at residues 187–195 is involved in fusion and/or binding to host membrane; the sequence is GWLWGTYRT. N-linked (GlcNAc...) asparagine; by host glycosylation is found at Asn239, Asn251, Asn285, Asn331, Asn344, Asn355, Asn361, Asn532, Asn569, Asn587, and Asn598. Hydrophobic membrane proximal region stretches follow at residues 647–699 and 658–698; these read FDNS…NFIK and IIQD…LNFI. Residues 702 to 722 traverse the membrane as a helical segment; it reads LGGMFTFLLIGAVIILVILLV. At 723–808 the chain is on the intravirion side; that stretch reads RRTNNMSQAP…KQISTEDKIV (86 aa).

Belongs to the herpesviridae glycoprotein B family. Homotrimer; disulfide-linked. Binds to heparan sulfate proteoglycans. Interacts with gH/gL heterodimer. In terms of processing, a proteolytic cleavage by host furin generates two subunits that remain linked by disulfide bonds.

The protein localises to the virion membrane. It is found in the host cell membrane. It localises to the host endosome membrane. Its subcellular location is the host Golgi apparatus membrane. Its function is as follows. Envelope glycoprotein that forms spikes at the surface of virion envelope. Essential for the initial attachment to heparan sulfate moieties of the host cell surface proteoglycans. Involved in fusion of viral and cellular membranes leading to virus entry into the host cell. Following initial binding to its host receptors, membrane fusion is mediated by the fusion machinery composed at least of gB and the heterodimer gH/gL. May be involved in the fusion between the virion envelope and the outer nuclear membrane during virion egress. The protein is Envelope glycoprotein B of Saimiriine herpesvirus 2 (strain 11) (SaHV-2).